We begin with the raw amino-acid sequence, 234 residues long: Multicopy suppressor of SEC21 protein 28 (234 aa).

The Cytoplasmic segment spans residues 1 to 47; the sequence is MQTPPESTDVKLDTLNEPSAHLIEKNVALPKDIFRSYLSYWIYEIAR. At T3 the chain carries Phosphothreonine. Residues 48-68 form a helical membrane-spanning segment; that stretch reads YTPVMILSLVIGVLVLLIIFF. Topologically, residues 69-72 are extracellular; it reads NDNE. The helical transmembrane segment at 73–93 threads the bilayer; it reads ACVFNSAIFAFTSLVGLLIIL. Residues 94–234 lie on the Cytoplasmic side of the membrane; that stretch reads SDGNPKLVSR…NIDALLKKTE (141 aa). Residues 231–234 form a COPI binding region; the sequence is KKTE.

It belongs to the DUP/COS family. In terms of assembly, interacts with MST27. Binds to coatomer proteins of COPI and SEC23/SEC24 of COPII coated vesicles.

The protein resides in the endoplasmic reticulum. It is found in the golgi apparatus. The protein localises to the cytoplasmic vesicle. Its subcellular location is the COPI-coated vesicle membrane. It localises to the COPII-coated vesicle membrane. Its function is as follows. Involved in protein trafficking vesicle formation, probably by stabilizing of coatomer at the Golgi membrane and thus allowing the efficient formation of COPI coated vesicles. In Saccharomyces cerevisiae (strain ATCC 204508 / S288c) (Baker's yeast), this protein is Multicopy suppressor of SEC21 protein 28 (MST28).